The following is a 787-amino-acid chain: Protein translocase subunit SecA (787 aa).

Residues glutamine 85, 103-107, and aspartate 492 each bind ATP; that span reads GEGKT.

The protein belongs to the SecA family. As to quaternary structure, monomer and homodimer. Part of the essential Sec protein translocation apparatus which comprises SecA, SecYEG and auxiliary proteins SecDF. Other proteins may also be involved.

It localises to the cell membrane. The protein localises to the cytoplasm. The enzyme catalyses ATP + H2O + cellular proteinSide 1 = ADP + phosphate + cellular proteinSide 2.. Its function is as follows. Part of the Sec protein translocase complex. Interacts with the SecYEG preprotein conducting channel. Has a central role in coupling the hydrolysis of ATP to the transfer of proteins into and across the cell membrane, serving as an ATP-driven molecular motor driving the stepwise translocation of polypeptide chains across the membrane. This is Protein translocase subunit SecA from Latilactobacillus sakei subsp. sakei (strain 23K) (Lactobacillus sakei subsp. sakei).